Here is a 208-residue protein sequence, read N- to C-terminus: Small ribosomal subunit protein uS2 (208 aa).

This sequence belongs to the universal ribosomal protein uS2 family.

This is Small ribosomal subunit protein uS2 from Pyrobaculum calidifontis (strain DSM 21063 / JCM 11548 / VA1).